A 304-amino-acid chain; its full sequence is Polyisoprenyl-teichoic acid--peptidoglycan teichoic acid transferase TagU (304 aa).

Residues 1–4 (MKKK) lie on the Cytoplasmic side of the membrane. The chain crosses the membrane as a helical; Signal-anchor for type II membrane protein span at residues 5 to 25 (ILFWILGIIGILIIGGGAYAY). The Extracellular portion of the chain corresponds to 26 to 304 (SIYSSVSKTL…KLRAHLEVTK (279 aa)).

It belongs to the LytR/CpsA/Psr (LCP) family.

The protein resides in the cell membrane. It functions in the pathway cell wall biogenesis. In terms of biological role, may catalyze the final step in cell wall teichoic acid biosynthesis, the transfer of the anionic cell wall polymers (APs) from their lipid-linked precursor to the cell wall peptidoglycan (PG). The sequence is that of Polyisoprenyl-teichoic acid--peptidoglycan teichoic acid transferase TagU from Bacillus cereus (strain ATCC 14579 / DSM 31 / CCUG 7414 / JCM 2152 / NBRC 15305 / NCIMB 9373 / NCTC 2599 / NRRL B-3711).